The following is a 550-amino-acid chain: Thioredoxin domain-containing protein 2 (550 aa).

A disordered region spans residues 1–50 (MFKKNQKLSKDKGLEVNSVQAGAPEESDVKLNNGGKANERGSNEFLDTAQ). Ser42 and Ser51 each carry phosphoserine. A disordered region spans residues 63–428 (MLHMSTEESE…IKSSEDVQPS (366 aa)). Polar residues-rich tracts occupy residues 73-87 (PPQQVSSTSMFSENT), 96-105 (PKSSTKNTQL), and 112-140 (KTSSYSKQTNSSNIPKSLAITTYPKQGST). Repeat copies occupy residues 104-118 (QLKQEDISKTSSYSK), 119-133 (QTNSSNIPKSLAITT), 134-148 (YPKQGSTLKPAANGT), 149-163 (HDREAEKPKSSEDLI), 164-178 (QSKKGDIFKPSEDSI), 179-193 (QSKKGDMPKSSEDPI), 194-208 (QSKKDDTAKSLEDTI), 209-223 (QSKNGDMPKSSEDPI), 224-238 (QSKKDDTARSLEDSI), 239-252 (QSKKGDMPKSSDTI), 253-267 (QSKESETPKFLQDTI), 268-282 (QSKGGKINKQVKDSM), 283-297 (KSKESKIRKPLKDSI), 298-312 (QSKENKIPKSSQDSA), 313-327 (QPKEGKIHKPLKDSL), 328-342 (PSKEGDISKPSEDTI), 343-357 (QAKEEITVSPEDTIQ), 358-384 (AKEEITMSPEDTIQAKEEITVSPEDTI), 385-399 (QAKEEITVSPEDTMQ), 400-412 (SKEEITVSPEDTV), 413-425 (QSQEGDIKSSEDV), and 426-440 (QPSENEIFPFEAEIE). The interval 104–440 (QLKQEDISKT…EIFPFEAEIE (337 aa)) is 22 X 15 AA approximate tandem repeat of Q-P-K-X-G-D-I-P-K-S-[PS]-E-[KE]-X-I. Composition is skewed to basic and acidic residues over residues 148–205 (THDR…KSLE), 217–259 (KSSE…ESET), 277–304 (QVKDSMKSKESKIRKPLKDSIQSKENKI), and 313–348 (QPKEGKIHKPLKDSLPSKEGDISKPSEDTIQAKEEI). Ser158 is subject to Phosphoserine. Residues Ser351 and Ser379 each carry the phosphoserine modification. The Thioredoxin domain maps to 401 to 550 (KEEITVSPED…KLEKSIAELK (150 aa)). Ser407 is subject to Phosphoserine. Cys477 and Cys480 are oxidised to a cystine.

In terms of tissue distribution, testis-specific. Strongly expressed in the testicular seminiferous tubules, mostly in the round spermatids.

It localises to the cytoplasm. In terms of biological role, probably plays a regulatory role in sperm development. May participate in regulation of fibrous sheath (FS) assembly by supporting the formation of disulfide bonds during sperm tail morphogenesis. May also be required to rectify incorrect disulfide pairing and generate suitable pairs between the FS constituents. Can reduce disulfide bonds in vitro in the presence of NADP and thioredoxin reductase. This chain is Thioredoxin domain-containing protein 2 (Txndc2), found in Rattus norvegicus (Rat).